Consider the following 139-residue polypeptide: Putative pre-16S rRNA nuclease (139 aa).

Belongs to the YqgF nuclease family.

Its subcellular location is the cytoplasm. In terms of biological role, could be a nuclease involved in processing of the 5'-end of pre-16S rRNA. The protein is Putative pre-16S rRNA nuclease of Streptococcus thermophilus (strain ATCC BAA-491 / LMD-9).